A 424-amino-acid chain; its full sequence is Tyrosine--tRNA ligase (424 aa).

Y37 provides a ligand contact to L-tyrosine. A 'HIGH' region motif is present at residues 42–51 (PTADSLHLGH). Residues Y175 and Q179 each coordinate L-tyrosine. The 'KMSKS' region signature appears at 235 to 239 (KFGKT). Residue K238 coordinates ATP. The S4 RNA-binding domain occupies 357–414 (ADLQQALVNAELVPSRGQARTMIGSNAVTINGEKQSNAEYNFSDADRLFGRYTLLRRG).

This sequence belongs to the class-I aminoacyl-tRNA synthetase family. TyrS type 1 subfamily. As to quaternary structure, homodimer.

It localises to the cytoplasm. It carries out the reaction tRNA(Tyr) + L-tyrosine + ATP = L-tyrosyl-tRNA(Tyr) + AMP + diphosphate + H(+). Its function is as follows. Catalyzes the attachment of tyrosine to tRNA(Tyr) in a two-step reaction: tyrosine is first activated by ATP to form Tyr-AMP and then transferred to the acceptor end of tRNA(Tyr). The sequence is that of Tyrosine--tRNA ligase from Serratia proteamaculans (strain 568).